The primary structure comprises 95 residues: UPF0213 protein PEPE_0875 (95 aa).

Residues 7-82 enclose the GIY-YIG domain; the sequence is NGFYFYVLRC…KQRTRSSKIK (76 aa).

Belongs to the UPF0213 family.

This Pediococcus pentosaceus (strain ATCC 25745 / CCUG 21536 / LMG 10740 / 183-1w) protein is UPF0213 protein PEPE_0875.